Here is a 141-residue protein sequence, read N- to C-terminus: 3-hydroxyacyl-[acyl-carrier-protein] dehydratase FabZ (141 aa).

Residue His-48 is part of the active site.

It belongs to the thioester dehydratase family. FabZ subfamily.

It localises to the cytoplasm. It carries out the reaction a (3R)-hydroxyacyl-[ACP] = a (2E)-enoyl-[ACP] + H2O. In terms of biological role, involved in unsaturated fatty acids biosynthesis. Catalyzes the dehydration of short chain beta-hydroxyacyl-ACPs and long chain saturated and unsaturated beta-hydroxyacyl-ACPs. In Bacillus velezensis (strain DSM 23117 / BGSC 10A6 / LMG 26770 / FZB42) (Bacillus amyloliquefaciens subsp. plantarum), this protein is 3-hydroxyacyl-[acyl-carrier-protein] dehydratase FabZ.